The chain runs to 266 residues: Apolipoprotein A-I (266 aa).

An N-terminal signal peptide occupies residues 1-18; it reads MKAVVLTLAVLFLTGSQA. 2 repeat units span residues 67 to 88 and 89 to 110. Positions 67–266 are 10 X approximate tandem repeats; that stretch reads LKLLDNWDSL…DEATKKLNAQ (200 aa). At Met-109 the chain carries Methionine sulfoxide. One copy of the 3; half-length repeat lies at 111-121; it reads KDLEEVKKKVQ. 5 tandem repeats follow at residues 122 to 143, 144 to 165, 166 to 187, 188 to 209, and 210 to 231. The stretch at 232-242 is one 9; half-length repeat; sequence PALEDLRQGLM. Repeat unit 10 spans residues 243 to 266; sequence PVLESFRASLLAAVDEATKKLNAQ.

It belongs to the apolipoprotein A1/A4/E family. Homodimer. Interacts with APOA1BP and CLU. Component of a sperm activating protein complex (SPAP), consisting of APOA1, an immunoglobulin heavy chain, an immunoglobulin light chain and albumin. Interacts with NDRG1. Interacts with SCGB3A2. Interacts with NAXE and YJEFN3. Glycosylated. Post-translationally, palmitoylated. In terms of processing, phosphorylation sites are present in the extracellular medium.

The protein localises to the secreted. Functionally, participates in the reverse transport of cholesterol from tissues to the liver for excretion by promoting cholesterol efflux from tissues and by acting as a cofactor for the lecithin cholesterol acyltransferase (LCAT). As part of the SPAP complex, activates spermatozoa motility. The polypeptide is Apolipoprotein A-I (APOA1) (Phoca vitulina (Harbor seal)).